Consider the following 638-residue polypeptide: Epithelial sodium channel subunit beta (638 aa).

The Cytoplasmic segment spans residues 1–50 (MPVKKYLLKCLHRLQKGPGYTYKELLVWYCNNTNTHGPKRIICEGPKKKA). The helical transmembrane segment at 51-71 (MWFLLTLLFACLVCWQWGVFI) threads the bilayer. Topologically, residues 72-530 (QTYLSWEVSV…GGQFGFWMGG (459 aa)) are extracellular. Disulfide bonds link Cys-98/Cys-270, Cys-182/Cys-187, Cys-194/Cys-201, Cys-247/Cys-254, Cys-359/Cys-446, Cys-384/Cys-442, Cys-388/Cys-438, Cys-397/Cys-424, and Cys-399/Cys-413. Residues Asn-135 and Asn-141 are each glycosylated (N-linked (GlcNAc...) asparagine). N-linked (GlcNAc...) asparagine glycosylation occurs at Asn-205. Residues 531–551 (SVLCLIEFGEIIIDFIWITII) form a helical membrane-spanning segment. The Cytoplasmic portion of the chain corresponds to 552–638 (KLVASCKGLR…MESDSEVEAI (87 aa)). A disordered region spans residues 594–620 (SCRPHGEVYPDQQTLPIPGTPPPNYDS). The PY motif; recruits WW domain-containing proteins and is thereby required for ubiquitination and inhibition of the channel by NEDD4 and NEDD4L motif lies at 614–618 (PPPNY). Residues Ser-631 and Ser-633 each carry the phosphoserine modification.

It belongs to the amiloride-sensitive sodium channel (TC 1.A.6) family. SCNN1B subfamily. In terms of assembly, component of the heterotrimeric epithelial sodium channel (ENaC) composed of an alpha/SCNN1A, a beta/SCNN1B and a gamma/SCNN1G subunit. Interacts with WWP1 (via WW domains). Interacts with WWP2 (via WW domains); inhibits the channel. Interacts with the full-length immature form of PCSK9 (pro-PCSK9). Interacts (N-glycosylated) with BPIFA1; the interaction is direct and inhibits the proteolytic processing of SCNN1A and SCNN1G and the activation of ENaC. In terms of processing, ubiquitinated. Can be ubiquitinated at multiple sites and undergo monoubiquitination and polyubiquitination. Ubiquitination by NEDD4 or NEDD4L inhibits the ENaC channel through endocytosis, intracellular retention and degradation of its individual subunits. However, some studies could not confirm the ubiquitination of this subunit of the ENaC. Post-translationally, N-glycosylated. N-glycosylation is required for interaction with BPIFA1. Phosphorylated on serine and threonine residues. Aldosterone and insulin increase the basal level of phosphorylation. As to expression, lung and kidney.

Its subcellular location is the apical cell membrane. The protein localises to the cytoplasmic vesicle membrane. It carries out the reaction Na(+)(in) = Na(+)(out). With respect to regulation, originally identified and characterized by its inhibition by the diuretic drug amiloride. Functionally, this is one of the three pore-forming subunits of the heterotrimeric epithelial sodium channel (ENaC), a critical regulator of sodium balance and fluid homeostasis. ENaC operates in epithelial tissues, where it mediates the electrodiffusion of sodium ions from extracellular fluid through the apical membrane of cells, with water following osmotically. It plays a key role in maintaining sodium homeostasis through electrogenic sodium reabsorption in the kidneys. This subunit is not essential for ENaC function in airway surface liquid homeostasis and proper mucus clearance. The sequence is that of Epithelial sodium channel subunit beta from Mus musculus (Mouse).